A 502-amino-acid polypeptide reads, in one-letter code: Lysine--tRNA ligase (502 aa).

Residues Glu-409 and Glu-416 each contribute to the Mg(2+) site.

The protein belongs to the class-II aminoacyl-tRNA synthetase family. Homodimer. Mg(2+) is required as a cofactor.

It is found in the cytoplasm. The enzyme catalyses tRNA(Lys) + L-lysine + ATP = L-lysyl-tRNA(Lys) + AMP + diphosphate. In Shouchella clausii (strain KSM-K16) (Alkalihalobacillus clausii), this protein is Lysine--tRNA ligase.